A 311-amino-acid chain; its full sequence is Methionyl-tRNA formyltransferase (311 aa).

109–112 (SKLP) contributes to the (6S)-5,6,7,8-tetrahydrofolate binding site.

It belongs to the Fmt family.

The enzyme catalyses L-methionyl-tRNA(fMet) + (6R)-10-formyltetrahydrofolate = N-formyl-L-methionyl-tRNA(fMet) + (6S)-5,6,7,8-tetrahydrofolate + H(+). Its function is as follows. Attaches a formyl group to the free amino group of methionyl-tRNA(fMet). The formyl group appears to play a dual role in the initiator identity of N-formylmethionyl-tRNA by promoting its recognition by IF2 and preventing the misappropriation of this tRNA by the elongation apparatus. In Mycoplasma pneumoniae (strain ATCC 29342 / M129 / Subtype 1) (Mycoplasmoides pneumoniae), this protein is Methionyl-tRNA formyltransferase (fmt).